Reading from the N-terminus, the 1491-residue chain is Terminal uridylyltransferase 7 (1491 aa).

Thr64 bears the Phosphothreonine mark. 2 positions are modified to phosphoserine: Ser132 and Ser172. The segment at 165–203 is disordered; sequence MSEMEAGSPENKKQRSRPRKPRRTRTEDSEQDGDLDGPV. Residues 178–187 are compositionally biased toward basic residues; the sequence is QRSRPRKPRR. The Matrin-type zinc-finger motif lies at 244–274; the sequence is YTCKLCDALIDSIPFAHKHIKEKRHKKNLKE. One can recognise a PAP-associated 1 domain in the interval 551 to 600; the sequence is VGQLWVELLRFYALEFNLADLVISIRVKELISRESKDWPKKRIAIEDPYS. A phosphoserine mark is found at Ser600 and Ser747. Disordered regions lie at residues 740–774 and 834–911; these read AELP…KHPE and QSRT…CGEN. Acidic residues predominate over residues 844-857; that stretch reads DDEEEEEEEEEEEE. Thr865 is subject to Phosphothreonine. Positions 885–897 are enriched in acidic residues; the sequence is GEEDALSEEDDLA. Ser891 is modified (phosphoserine). The interval 947–1491 is sufficient for monouridylation activity; it reads RKLTFTKGKS…ASVKRTQQES (545 aa). The CCHC-type 1 zinc finger occupies 959–976; that stretch reads VVCSLCKREGHLKKDCPE. UTP is bound by residues 1043–1046, 1053–1056, Asn1126, Lys1148, 1166–1170, and His1282; these read SSKN, SDLD, and SYAYT. The Mg(2+) site is built by Asp1054 and Asp1056. Positions 1230 to 1282 constitute a PAP-associated 2 domain; the sequence is VGQLWLGLLRFYTEEFDFKEHVISIRRKSLLTTFKKQWTSKYIVIEDPFDLNH. A CCHC-type 2 zinc finger spans residues 1341-1358; the sequence is RCCRICGKIGHFMKDCPM. 2 disordered regions span residues 1362 to 1399 and 1463 to 1491; these read VRRR…EKEV and PQFK…QQES. Positions 1377–1399 are enriched in basic and acidic residues; that stretch reads SESKEKRSKEDKEIQNKYTEKEV. The segment at 1447–1464 adopts a CCHC-type 3 zinc-finger fold; sequence KRCFICGREGHIKKECPQ. Over residues 1470–1481 the composition is skewed to polar residues; sequence GSLSSKYMTQGR.

This sequence belongs to the DNA polymerase type-B-like family. Mg(2+) serves as cofactor. The cofactor is Mn(2+).

The protein localises to the cytoplasm. The catalysed reaction is RNA(n) + UTP = RNA(n)-3'-uridine ribonucleotide + diphosphate. Its function is as follows. Uridylyltransferase that mediates the terminal uridylation of mRNAs with short (less than 25 nucleotides) poly(A) tails, hence facilitating global mRNA decay. Essential for both oocyte maturation and fertility. Through 3' terminal uridylation of mRNA, sculpts, with TUT7, the maternal transcriptome by eliminating transcripts during oocyte growth. Involved in microRNA (miRNA)-induced gene silencing through uridylation of deadenylated miRNA targets. Also acts as a suppressor of miRNA biogenesis by mediating the terminal uridylation of miRNA precursors, including that of let-7 (pre-let-7). Uridylated pre-let-7 RNA is not processed by Dicer and undergo degradation. Pre-let-7 uridylation is strongly enhanced in the presence of LIN28A. Due to functional redundancy between ZCCHC6 and ZCCHC11, the identification of the specific role of each of these proteins is difficult. Involved in microRNA (miRNA)-induced gene silencing through uridylation of deadenylated miRNA targets. Also functions as an integral regulator of microRNA biogenesiS using 3 different uridylation mechanisms. Acts as a suppressor of miRNA biogenesis by mediating the terminal uridylation of some miRNA precursors, including that of let-7 (pre-let-7). Uridylated pre-let-7 RNA is not processed by Dicer and undergo degradation. Pre-let-7 oligouridylation is strongly enhanced in the presence of LIN28A. In the absence of LIN28A, TUT7 and TUT4 monouridylate group II pre-miRNAs, which includes most of pre-let7 members, that shapes an optimal 3' end overhang for efficient processing. Add oligo-U tails to truncated pre-miRNAS with a 5' overhang which may promote rapid degradation of non-functional pre-miRNA species. Does not play a role in replication-dependent histone mRNA degradation. Due to functional redundancy between TUT4 and TUT7, the identification of the specific role of each of these proteins is difficult. TUT4 and TUT7 restrict retrotransposition of long interspersed element-1 (LINE-1) in cooperation with MOV10 counteracting the RNA chaperonne activity of L1RE1. TUT7 uridylates LINE-1 mRNAs in the cytoplasm which inhibits initiation of reverse transcription once in the nucleus, whereas uridylation by TUT4 destabilizes mRNAs in cytoplasmic ribonucleoprotein granules. The polypeptide is Terminal uridylyltransferase 7 (Mus musculus (Mouse)).